Consider the following 423-residue polypeptide: Mannose-6-phosphate isomerase (423 aa).

Alanine 2 carries the N-acetylalanine modification. Phosphoserine is present on residues serine 102 and serine 108. The Zn(2+) site is built by glutamine 110, histidine 112, glutamate 137, and histidine 276. Arginine 295 is a catalytic residue.

This sequence belongs to the mannose-6-phosphate isomerase type 1 family. Requires Zn(2+) as cofactor.

The protein localises to the cytoplasm. The catalysed reaction is D-mannose 6-phosphate = D-fructose 6-phosphate. Its pathway is nucleotide-sugar biosynthesis; GDP-alpha-D-mannose biosynthesis; alpha-D-mannose 1-phosphate from D-fructose 6-phosphate: step 1/2. Its function is as follows. Isomerase that catalyzes the interconversion of fructose-6-P and mannose-6-P and has a critical role in the supply of D-mannose derivatives required for many eukaryotic glycosylation reactions. This is Mannose-6-phosphate isomerase from Rattus norvegicus (Rat).